Consider the following 546-residue polypeptide: Chaperonin GroEL (546 aa).

ATP is bound by residues 30–33, Lys51, 87–91, Gly415, 479–481, and Asp495; these read TLGP, DGTTT, and NAA. A disordered region spans residues 527-546; that stretch reads DKPAAPPMPGGMGGMGGMDF. Residues 536 to 546 are compositionally biased toward gly residues; it reads GGMGGMGGMDF.

The protein belongs to the chaperonin (HSP60) family. Forms a cylinder of 14 subunits composed of two heptameric rings stacked back-to-back. Interacts with the co-chaperonin GroES.

It is found in the cytoplasm. It carries out the reaction ATP + H2O + a folded polypeptide = ADP + phosphate + an unfolded polypeptide.. In terms of biological role, together with its co-chaperonin GroES, plays an essential role in assisting protein folding. The GroEL-GroES system forms a nano-cage that allows encapsulation of the non-native substrate proteins and provides a physical environment optimized to promote and accelerate protein folding. This Bordetella petrii (strain ATCC BAA-461 / DSM 12804 / CCUG 43448) protein is Chaperonin GroEL.